The chain runs to 114 residues: Procyclic form-specific polypeptide A-alpha (114 aa).

A signal peptide spans 1-27 (MAPRSLYLLAILLFSANLFAGVGFAAA). The segment at 33-95 (SNVIVKGGKG…EPEPEPGAAT (63 aa)) is disordered. A compositionally biased stretch (acidic residues) spans 47–89 (DGPEEPEETGPEETGPEETGPEETGPEETGPEETGPEETEPEP). A run of 7 repeats spans residues 48–52 (GPEEP), 56–60 (GPEET), 61–65 (GPEET), 66–70 (GPEET), 71–75 (GPEET), 76–80 (GPEET), and 81–85 (GPEET). Residues 48–85 (GPEEPEETGPEETGPEETGPEETGPEETGPEETGPEET) form a 7 X 5 AA tandem repeats of G-P-E-E-[PT] region. G92 is lipidated: GPI-anchor amidated glycine. Positions 93–114 (AATLKSVALPFAVAAAALVAAF) are excised as a propeptide.

The protein localises to the cell membrane. Its function is as follows. Major surface antigen of procyclic forms. The chain is Procyclic form-specific polypeptide A-alpha (PARPA-ALPHA) from Trypanosoma brucei brucei.